The following is a 308-amino-acid chain: tRNA pseudouridine synthase B (308 aa).

Catalysis depends on aspartate 47, which acts as the Nucleophile.

The protein belongs to the pseudouridine synthase TruB family. Type 1 subfamily.

The catalysed reaction is uridine(55) in tRNA = pseudouridine(55) in tRNA. Its function is as follows. Responsible for synthesis of pseudouridine from uracil-55 in the psi GC loop of transfer RNAs. This is tRNA pseudouridine synthase B from Xanthomonas oryzae pv. oryzae (strain MAFF 311018).